Here is a 75-residue protein sequence, read N- to C-terminus: Conotoxin Im23.5 (75 aa).

The first 23 residues, 1–23 (MKFFTCLLLLLVVLTVVFDNVDA), serve as a signal peptide directing secretion. 3 disulfide bridges follow: C24–C28, C37–C40, and C41–C43. A propeptide spanning residues 24 to 50 (CDRSCTGVMGHPSCATCCACFTSAGKR) is cleaved from the precursor.

In terms of tissue distribution, expressed by the venom duct.

The protein localises to the secreted. Functionally, probable neurotoxin. This Conus imperialis (Imperial cone) protein is Conotoxin Im23.5.